Reading from the N-terminus, the 329-residue chain is Aspartate carbamoyltransferase catalytic subunit (329 aa).

2 residues coordinate carbamoyl phosphate: Arg63 and Thr64. Residue Lys91 coordinates L-aspartate. Carbamoyl phosphate-binding residues include Arg113, His141, and Gln144. Arg179 and Arg234 together coordinate L-aspartate. The carbamoyl phosphate site is built by Gly275 and Pro276.

It belongs to the aspartate/ornithine carbamoyltransferase superfamily. ATCase family. Heterododecamer (2C3:3R2) of six catalytic PyrB chains organized as two trimers (C3), and six regulatory PyrI chains organized as three dimers (R2).

The catalysed reaction is carbamoyl phosphate + L-aspartate = N-carbamoyl-L-aspartate + phosphate + H(+). It participates in pyrimidine metabolism; UMP biosynthesis via de novo pathway; (S)-dihydroorotate from bicarbonate: step 2/3. Catalyzes the condensation of carbamoyl phosphate and aspartate to form carbamoyl aspartate and inorganic phosphate, the committed step in the de novo pyrimidine nucleotide biosynthesis pathway. The chain is Aspartate carbamoyltransferase catalytic subunit from Magnetococcus marinus (strain ATCC BAA-1437 / JCM 17883 / MC-1).